We begin with the raw amino-acid sequence, 449 residues long: Keratin, type I cytoskeletal 27 (449 aa).

The head stretch occupies residues 1-73 (MSVRFSSASR…VNEHGLLSGN (73 aa)). Residues 74-109 (EKVTMQNLNDRLASYLENVQALEEANADLEQKIKDW) form a coil 1A region. An IF rod domain is found at 74–389 (EKVTMQNLND…LLIGGDEGSC (316 aa)). Residues 110 to 131 (YEKFGPGSCRGLDHDYSRYFPI) are linker 1. The tract at residues 132–223 (IDDLRTQIIS…KNHEEEMQAL (92 aa)) is coil 1B. Positions 224 to 246 (QCAAGGNVNVEMNAAPGVDLTVL) are linker 12. The coil 2 stretch occupies residues 247–385 (LNNMRAEYEA…ETYCLLIGGD (139 aa)). The tail stretch occupies residues 386-449 (EGSCVKSKGQ…NNKNEQRIPS (64 aa)). The tract at residues 425–449 (LSSRVHTLEEKSTKVNNKNEQRIPS) is disordered. The span at 430 to 449 (HTLEEKSTKVNNKNEQRIPS) shows a compositional bias: basic and acidic residues.

The protein belongs to the intermediate filament family. In terms of assembly, heterotetramer of two type I and two type II keratins. Interacts with KRT6A to form filaments.

The protein localises to the cytoplasm. Its function is as follows. Essential for the proper assembly of type I and type II keratin protein complexes and formation of keratin intermediate filaments in the inner root sheath (irs). The chain is Keratin, type I cytoskeletal 27 from Rattus norvegicus (Rat).